The sequence spans 96 residues: Plasminogen-like protein B (96 aa).

Residues 1–19 form the signal peptide; that stretch reads MEHKEVVLLLLLFLKSGQG. The PAN domain occupies 20 to 96; that stretch reads EPLDDYVNTQ…RMRDAVLFEK (77 aa). 2 disulfides stabilise this stretch: Cys-49/Cys-73 and Cys-53/Cys-61.

It localises to the secreted. In terms of biological role, may bind noncovalently to lysine binding sites present in the kringle structures of plasminogen. This may interfere with the binding of fibrin or alpha-2-antiplasmin to plasminogen and may result in the localization of activity at sites necessary for extracellular matrix destruction. This chain is Plasminogen-like protein B (PLGLB1), found in Homo sapiens (Human).